The sequence spans 1780 residues: Protein TIC 214 (1780 aa).

6 consecutive transmembrane segments (helical) span residues 19-39 (IINS…FSIG), 68-88 (FIAG…HLAL), 91-111 (PHTI…WNNN), 133-153 (VFLN…SSML), 176-196 (VGWL…LVWI), and 227-247 (IFSI…PSPI). A disordered region spans residues 251–275 (KLKGTSETEERGGTKQDQEVSTEEA). The span at 254 to 268 (GTSETEERGGTKQDQ) shows a compositional bias: basic and acidic residues.

The protein belongs to the TIC214 family. In terms of assembly, part of the Tic complex.

It localises to the plastid. It is found in the chloroplast inner membrane. Involved in protein precursor import into chloroplasts. May be part of an intermediate translocation complex acting as a protein-conducting channel at the inner envelope. The polypeptide is Protein TIC 214 (Draba nemorosa (Woodland whitlowgrass)).